We begin with the raw amino-acid sequence, 352 residues long: UDP-3-O-acylglucosamine N-acyltransferase (352 aa).

Catalysis depends on H257, which acts as the Proton acceptor.

The protein belongs to the transferase hexapeptide repeat family. LpxD subfamily. In terms of assembly, homotrimer.

It catalyses the reaction a UDP-3-O-[(3R)-3-hydroxyacyl]-alpha-D-glucosamine + a (3R)-hydroxyacyl-[ACP] = a UDP-2-N,3-O-bis[(3R)-3-hydroxyacyl]-alpha-D-glucosamine + holo-[ACP] + H(+). It participates in bacterial outer membrane biogenesis; LPS lipid A biosynthesis. In terms of biological role, catalyzes the N-acylation of UDP-3-O-acylglucosamine using 3-hydroxyacyl-ACP as the acyl donor. Is involved in the biosynthesis of lipid A, a phosphorylated glycolipid that anchors the lipopolysaccharide to the outer membrane of the cell. The chain is UDP-3-O-acylglucosamine N-acyltransferase from Methylobacterium sp. (strain 4-46).